A 261-amino-acid polypeptide reads, in one-letter code: MSNALIRLEQVGVTFAGQNVLENIQLSVEPGQIVTLIGPNGAGKTTLVRAVLGLLKPDTGSVWRKPKLRVGYMPQKLHVDPTLPLSVLRFLRLVPGVDRTRALAALKEVGAEQVIDSPVQSISGGEMQRVLLARALLREPELLVLDEPVQGVDVAGQAELYSLITRLRDRHGCGVLMVSHDLHLVMSTTDQVVCLNRHVCCSGHPEQVSGDPAFVELFGKNAPSLAIYHHHHDHAHDLHGSVVTQPASGHAHVHGENCKHG.

Residues 6 to 221 enclose the ABC transporter domain; sequence IRLEQVGVTF…PAFVELFGKN (216 aa). 38 to 45 is a binding site for ATP; sequence GPNGAGKT.

Belongs to the ABC transporter superfamily. Zinc importer (TC 3.A.1.15.5) family. In terms of assembly, the complex is composed of two ATP-binding proteins (ZnuC), two transmembrane proteins (ZnuB) and a solute-binding protein (ZnuA).

It is found in the cell inner membrane. It carries out the reaction Zn(2+)(out) + ATP(in) + H2O(in) = Zn(2+)(in) + ADP(in) + phosphate(in) + H(+)(in). Its function is as follows. Part of the ABC transporter complex ZnuABC involved in zinc import. Responsible for energy coupling to the transport system. This Pseudomonas fluorescens (strain ATCC BAA-477 / NRRL B-23932 / Pf-5) protein is Zinc import ATP-binding protein ZnuC.